Consider the following 318-residue polypeptide: Ribosomal RNA small subunit methyltransferase H (318 aa).

Residues 42-44 (GGH), Asp-62, Phe-86, Asp-108, and Gln-115 each bind S-adenosyl-L-methionine.

The protein belongs to the methyltransferase superfamily. RsmH family.

It localises to the cytoplasm. The catalysed reaction is cytidine(1402) in 16S rRNA + S-adenosyl-L-methionine = N(4)-methylcytidine(1402) in 16S rRNA + S-adenosyl-L-homocysteine + H(+). Specifically methylates the N4 position of cytidine in position 1402 (C1402) of 16S rRNA. In Yersinia pestis (strain Pestoides F), this protein is Ribosomal RNA small subunit methyltransferase H.